We begin with the raw amino-acid sequence, 216 residues long: Uracil phosphoribosyltransferase (216 aa).

Residues R32, R41, L75–I78, and K77 contribute to the GTP site. Residue R85 coordinates 5-phospho-alpha-D-ribose 1-diphosphate. R102 provides a ligand contact to GTP. R110 contacts 5-phospho-alpha-D-ribose 1-diphosphate. Residue R131 coordinates GTP. 5-phospho-alpha-D-ribose 1-diphosphate is bound by residues D137 and D137–S145. Y201 provides a ligand contact to D-ribose 5-phosphate. Uracil contacts are provided by residues L202 and G207–F209. Residue D208 participates in 5-phospho-alpha-D-ribose 1-diphosphate binding.

The protein belongs to the UPRTase family. The cofactor is Mg(2+).

It catalyses the reaction UMP + diphosphate = 5-phospho-alpha-D-ribose 1-diphosphate + uracil. The protein operates within pyrimidine metabolism; UMP biosynthesis via salvage pathway; UMP from uracil: step 1/1. Its activity is regulated as follows. Allosterically activated by GTP. Catalyzes the conversion of uracil and 5-phospho-alpha-D-ribose 1-diphosphate (PRPP) to UMP and diphosphate. The sequence is that of Uracil phosphoribosyltransferase (FUR1) from Lachancea kluyveri (Yeast).